Reading from the N-terminus, the 311-residue chain is Transmembrane protein DDB_G0273707/DDB_G0273361 (311 aa).

Positions 1–113 (MNEIEVDNLS…NNNNNKNENN (113 aa)) are disordered. N-linked (GlcNAc...) asparagine glycosylation occurs at Asn-8. The segment covering 9–18 (LSHTNKNVAT) has biased composition (polar residues). N-linked (GlcNAc...) asparagine glycans are attached at residues Asn-35, Asn-38, Asn-62, and Asn-76. Composition is skewed to low complexity over residues 37–67 (SNNS…SNSN) and 76–111 (NNSN…NKNE). Residues 95-124 (NNNNNNNNNNNNNNKNENNNKIKNEKINIL) are a coiled coil. 5 consecutive transmembrane segments (helical) span residues 150–170 (LEEI…LALL), 181–201 (IFLL…PKSP), 208–228 (LVLG…ALVY), 235–255 (VACA…KSIH), and 276–296 (FYYI…TALI).

It is found in the membrane. In Dictyostelium discoideum (Social amoeba), this protein is Transmembrane protein DDB_G0273707/DDB_G0273361.